The chain runs to 472 residues: Ribulose bisphosphate carboxylase large chain 1 (472 aa).

Residues Asn-115 and Thr-165 each coordinate substrate. Lys-167 acts as the Proton acceptor in catalysis. Lys-169 serves as a coordination point for substrate. Lys-193, Asp-195, and Glu-196 together coordinate Mg(2+). N6-carboxylysine is present on Lys-193. The Proton acceptor role is filled by His-286. Substrate-binding residues include Arg-287, His-319, and Ser-371.

Belongs to the RuBisCO large chain family. Type I subfamily. In terms of assembly, heterohexadecamer of 8 large chains and 8 small chains. Requires Mg(2+) as cofactor.

It carries out the reaction 2 (2R)-3-phosphoglycerate + 2 H(+) = D-ribulose 1,5-bisphosphate + CO2 + H2O. The enzyme catalyses D-ribulose 1,5-bisphosphate + O2 = 2-phosphoglycolate + (2R)-3-phosphoglycerate + 2 H(+). RuBisCO catalyzes two reactions: the carboxylation of D-ribulose 1,5-bisphosphate, the primary event in carbon dioxide fixation, as well as the oxidative fragmentation of the pentose substrate. Both reactions occur simultaneously and in competition at the same active site. This is Ribulose bisphosphate carboxylase large chain 1 from Rhodopseudomonas palustris (strain BisB5).